A 101-amino-acid polypeptide reads, in one-letter code: Urease subunit beta (101 aa).

The protein belongs to the urease beta subunit family. In terms of assembly, heterotrimer of UreA (gamma), UreB (beta) and UreC (alpha) subunits. Three heterotrimers associate to form the active enzyme.

It localises to the cytoplasm. The catalysed reaction is urea + 2 H2O + H(+) = hydrogencarbonate + 2 NH4(+). It participates in nitrogen metabolism; urea degradation; CO(2) and NH(3) from urea (urease route): step 1/1. This Burkholderia cenocepacia (strain ATCC BAA-245 / DSM 16553 / LMG 16656 / NCTC 13227 / J2315 / CF5610) (Burkholderia cepacia (strain J2315)) protein is Urease subunit beta.